An 87-amino-acid polypeptide reads, in one-letter code: Small ribosomal subunit protein uS17 (87 aa).

Belongs to the universal ribosomal protein uS17 family. As to quaternary structure, part of the 30S ribosomal subunit.

Functionally, one of the primary rRNA binding proteins, it binds specifically to the 5'-end of 16S ribosomal RNA. The sequence is that of Small ribosomal subunit protein uS17 from Bacillus licheniformis (strain ATCC 14580 / DSM 13 / JCM 2505 / CCUG 7422 / NBRC 12200 / NCIMB 9375 / NCTC 10341 / NRRL NRS-1264 / Gibson 46).